The sequence spans 270 residues: DNA repair protein RecO (270 aa).

The tract at residues Pro-202–Ser-221 is disordered.

It belongs to the RecO family.

Involved in DNA repair and RecF pathway recombination. The polypeptide is DNA repair protein RecO (Rhodopirellula baltica (strain DSM 10527 / NCIMB 13988 / SH1)).